The sequence spans 709 residues: Potassium-transporting ATPase ATP-binding subunit (709 aa).

4 helical membrane-spanning segments follow: residues Val55–Ala75, Gly86–Ala106, Ile236–Leu256, and Val269–Ser289. Catalysis depends on Asp324, which acts as the 4-aspartylphosphate intermediate. Residues Asp361, Glu365, Phe395–Ser402, and Lys417 contribute to the ATP site. Positions 545 and 549 each coordinate Mg(2+). 3 helical membrane passes run Phe615–Met635, Ala643–Leu663, and Gly688–Val708.

Belongs to the cation transport ATPase (P-type) (TC 3.A.3) family. Type IA subfamily. In terms of assembly, the system is composed of three essential subunits: KdpA, KdpB and KdpC.

It localises to the cell membrane. The enzyme catalyses K(+)(out) + ATP + H2O = K(+)(in) + ADP + phosphate + H(+). Part of the high-affinity ATP-driven potassium transport (or Kdp) system, which catalyzes the hydrolysis of ATP coupled with the electrogenic transport of potassium into the cytoplasm. This subunit is responsible for energy coupling to the transport system and for the release of the potassium ions to the cytoplasm. This chain is Potassium-transporting ATPase ATP-binding subunit, found in Mycobacterium tuberculosis (strain ATCC 25618 / H37Rv).